We begin with the raw amino-acid sequence, 497 residues long: Alkene monooxygenase system, oxygenase component subunit alpha (497 aa).

The Fe cation site is built by E104, E134, H137, E197, E231, and H234.

It belongs to the TmoA/XamoA family. As to quaternary structure, the alkene monooxygenase multicomponent enzyme system is composed of an electron transfer component and a monooxygenase component interacting with the effector protein XamoD. The electron transfer component is composed of a ferredoxin reductase (XamoF) and a ferredoxin (XamoC), and the monooxygenase component is formed by a heterohexamer (dimer of heterotrimers) of two alpha subunits (XamoA), two beta subunits (XamoE) and two gamma subunits (XamoB). Fe(2+) serves as cofactor.

The protein localises to the cytoplasm. It catalyses the reaction propene + NADH + O2 + H(+) = 1,2-epoxypropane + NAD(+) + H2O. Inhibited by propyne. Component of the alkene monooxygenase multicomponent enzyme system which catalyzes the O2- and NADH-dependent epoxidation of short chain (C2 to C6) alkenes to their corresponding epoxides. Also able to catalyze the oxidation of a number of chlorinated alkenes, including trichloroethylene, cis- and trans-1,2-dichloroethylene, vinyl chloride, 1-chloropropylene, 1,3-dichloropropylene and 2,3-dichloropropylene. The protein is Alkene monooxygenase system, oxygenase component subunit alpha of Xanthobacter autotrophicus (strain ATCC BAA-1158 / Py2).